Here is a 455-residue protein sequence, read N- to C-terminus: UDP-N-acetylmuramoylalanine--D-glutamate ligase (455 aa).

112–118 (GTNGKTT) is a binding site for ATP.

Belongs to the MurCDEF family.

The protein localises to the cytoplasm. The catalysed reaction is UDP-N-acetyl-alpha-D-muramoyl-L-alanine + D-glutamate + ATP = UDP-N-acetyl-alpha-D-muramoyl-L-alanyl-D-glutamate + ADP + phosphate + H(+). Its pathway is cell wall biogenesis; peptidoglycan biosynthesis. Its function is as follows. Cell wall formation. Catalyzes the addition of glutamate to the nucleotide precursor UDP-N-acetylmuramoyl-L-alanine (UMA). This Trichormus variabilis (strain ATCC 29413 / PCC 7937) (Anabaena variabilis) protein is UDP-N-acetylmuramoylalanine--D-glutamate ligase.